A 376-amino-acid chain; its full sequence is tRNA-aminoacylation cofactor ARC1 (376 aa).

Positions lysine 22–glutamine 46 are interaction with methionyl-tRNA synthetase MES1. 2 interaction with glutamyl-tRNA synthetase GUS1 regions span residues arginine 52–leucine 61 and threonine 91–histidine 121. The segment at lysine 133–proline 206 is disordered. Positions alanine 146–alanine 180 are enriched in basic and acidic residues. Residues lysine 186–lysine 199 show a composition bias toward low complexity. The 103-residue stretch at lysine 205–phenylalanine 307 folds into the tRNA-binding domain.

This sequence belongs to the tRNA-aminoacylation cofactor ARC1 family. In terms of assembly, component of a yeast aminoacyl-tRNA synthase (aaRS) complex formed by methionyl-tRNA synthase MES1, glutamyl-tRNA synthase GUS1 and the tRNA aminoacylation cofactor ARC1 in a stoichiometric complex. Interacts (via N-ter) with MES1 (via N-ter) and GUS1 (via N-ter). Can also form a stable binary complex with either MES1 or GUS1 that is functional in terms of aminoacylation.

The protein resides in the cytoplasm. Binds to tRNA and functions as a cofactor for the methionyl-tRNA synthetase (MetRS) and glutamyl-tRNA synthetase (GluRS). Forms a complex with MetRS and GluRS and increases their affinity for cognate tRNAs due to the presence of a tRNA binding domain in its middle and C-terminal part. Binds specifically G4 quadruplex nucleic acid structures (these are four-stranded right-handed helices, stabilized by guanine base quartets). Also required for cytoplasmic confinement of the synthetases and tRNA. In Saccharomyces cerevisiae (strain ATCC 204508 / S288c) (Baker's yeast), this protein is tRNA-aminoacylation cofactor ARC1 (ARC1).